The sequence spans 773 residues: MAQTAYLKVTRIAMRSASNLSKRRVEELNSGLGELRQLLSCVVCCQLLVDPYSPKGKRCQHNVCRLCLRGKKHLFPSCTQCEGCSDFKTYEENRMMAAQLLCYKTLCVHLLHSALFGELAGMRPQVARELVPRIKLPPKTTQEFIREGSNISDTFDIFLPQPDLPFLKDMPTSLPAETPPTSAVTTPELPYDHHLNISDIEAEAAATAEQGHFSPLPLLPTGSRMGMLSHAGQIVIATESSESGFMDQAWTDQVDLSGTVSVSKYTNSGNNFAVSYVMPTSATTKFDPQELQIGQVVQMADSTQLAVLAAVEETVETSTQLTVLSTTVEETVETSTQLEVLTSAEEPNEISDQLANLQVEESDEALVEETVEEAEGTSIPSEVVAEHMEEDQHLDVHTSQSPTQTEMEEAVEEHVATKTQLGHVQTELQDAESLQKDFEDAKAAAEEAKEKEKDLHAISAELQKEDSDEPTLKRKRTRTLKASQAAKIEPVPSEVKTKVQSGKGALRRIRGKDKEEKVKPPKPKCRCGISGSSNTLTTCRNSRCPCYKSYNSCAGCHCVCCKNPHKEDYVESDEDDDLEDFEMPKDVPEPMTQSEEPVVAEPRQEENSMAPPDSSAPISLVPLNNLQQSQHPLVLVQNEKGEYQGFNIFQGSKPLDPVTVGFTIRVQLQHTDGFGSLPQYAYIMPTIDPPNPPAPSLSPPPPPAPDREVIEPPAKKFRTSRTRRGRANFSALDTVDELVSGGSRSNSAAGDRSSATDNAHSLFEEIMSGSDDL.

Zn(2+) is bound by residues C41, C44, C59, H61, C64, C67, C78, and C84. The segment at 41–85 (CVVCCQLLVDPYSPKGKRCQHNVCRLCLRGKKHLFPSCTQCEGCS) adopts an RING-type zinc-finger fold. Positions 424–468 (VQTELQDAESLQKDFEDAKAAAEEAKEKEKDLHAISAELQKEDSD) form a coiled coil. The interval 460–525 (AELQKEDSDE…EKVKPPKPKC (66 aa)) is disordered. Residues 520–571 (PPKPKCRCGISGSSNTLTTCRNSRCPCYKSYNSCAGCHCVCCKNPHKEDYVE) enclose the CXC MSL2-type domain. Residues C525, C527, C539, C544, C546, C553, C556, C558, and C561 each coordinate Zn(2+). The interval 571 to 773 (ESDEDDDLED…EEIMSGSDDL (203 aa)) is C-terminal disordered region (CTD). Acidic residues predominate over residues 572–581 (SDEDDDLEDF). The segment at 572 to 616 (SDEDDDLEDFEMPKDVPEPMTQSEEPVVAEPRQEENSMAPPDSSA) is disordered. Positions 620–685 (LVPLNNLQQS…SLPQYAYIMP (66 aa)) are clamp-binding domain (CBD). A pro/Bas region region spans residues 650–708 (QGSKPLDPVTVGFTIRVQLQHTDGFGSLPQYAYIMPTIDPPNPPAPSLSPPPPPAPDRE). Positions 687–704 (IDPPNPPAPSLSPPPPPA) are enriched in pro residues. The segment at 687 to 773 (IDPPNPPAPS…EEIMSGSDDL (87 aa)) is disordered. The segment covering 705–714 (PDREVIEPPA) has biased composition (basic and acidic residues). A compositionally biased stretch (basic residues) spans 715-726 (KKFRTSRTRRGR). Positions 742 to 759 (GSRSNSAAGDRSSATDNA) are enriched in polar residues.

It belongs to the MSL2 family. Component of the male-specific lethal (MSL) histone acetyltransferase complex, composed of mof, mle, msl-1, msl-2 and msl-3 proteins, as well as roX1 and roX2 non-coding RNAs. When not associated with chromatin, the MSL complex associates with msl-2 mRNAs, possibly to regulate the amount of available MSL complex. Interacts with Clamp; promoting cooperative binding to DNA PionX sites and recruitment of the MSL complex to chromatin. Autoubiquitinated.

The protein localises to the nucleus. It is found in the chromosome. The catalysed reaction is S-ubiquitinyl-[E2 ubiquitin-conjugating enzyme]-L-cysteine + [acceptor protein]-L-lysine = [E2 ubiquitin-conjugating enzyme]-L-cysteine + N(6)-ubiquitinyl-[acceptor protein]-L-lysine.. Its pathway is protein modification; protein ubiquitination. Limiting component of the male-specific lethal (MSL) histone acetyltransferase complex, a multiprotein complex essential for elevating transcription of the single X chromosome in the male (X chromosome dosage compensation). The MSL complex specifically associates with the single X chromosome in males and mediates formation of H4K16ac, promoting a two-fold activation of X chromosome. Msl-2 is only produced in males, constituting the limiting component of the MSL complex. Within the MSL complex, msl-2 mediates the selective binding to the X chromosome and recruitment of the MSL complex via two different mechanisms. Recognizes DNA motifs that are enriched on X chromosome, named PionX sites, which are characterized by sequence features and distinct DNA conformation (base roll). Specific recognition of the X chromosome is also mediated by the formation of a gel-like state: msl-2 undergoes liquid-liquid phase separation upon binding to roX1 and roX2 non-coding RNAs, leading to nucleate the MSL complex on the X chromosome. Msl-2 is also required for translation and/or stability of msl-1 in males. Also acts as an E3 ubiquitin ligase: in complex with msl-1, mediates ubiquitination of histone H2B at 'Lys-34' (H2BK34Ub). Also catalyzes ubiquitination of msl-1, msl-3 and mof components of the MSL complex. The chain is E3 ubiquitin-protein ligase msl-2 from Drosophila melanogaster (Fruit fly).